The following is a 220-amino-acid chain: 7-cyano-7-deazaguanine synthase 1 (220 aa).

Residue 10–20 coordinates ATP; it reads FSGGIDSTVLL. Zn(2+)-binding residues include Cys-183, Cys-191, Cys-194, and Cys-197.

It belongs to the QueC family. In terms of assembly, homodimer. Requires Zn(2+) as cofactor.

It catalyses the reaction 7-carboxy-7-deazaguanine + NH4(+) + ATP = 7-cyano-7-deazaguanine + ADP + phosphate + H2O + H(+). Its pathway is purine metabolism; 7-cyano-7-deazaguanine biosynthesis. Its function is as follows. Catalyzes the ATP-dependent conversion of 7-carboxy-7-deazaguanine (CDG) to 7-cyano-7-deazaguanine (preQ(0)). The sequence is that of 7-cyano-7-deazaguanine synthase 1 from Desulfitobacterium hafniense (strain Y51).